Consider the following 176-residue polypeptide: Membrane-anchored junction protein (176 aa).

The Nuclear segment spans residues 1–151 (MSLKPFTYPF…QHNSPPPKER (151 aa)). The interval 59 to 150 (AVMRKRKHMD…LQHNSPPPKE (92 aa)) is disordered. The span at 95 to 107 (PPVETRRNRERKT) shows a compositional bias: basic and acidic residues. A compositionally biased stretch (polar residues) spans 108–120 (QQGLQETLASDIT). A helical membrane pass occupies residues 152–170 (AATGFFGFLSSLFPFRYFF). Over 171 to 176 (RKSSHS) the chain is Perinuclear space.

The protein belongs to the MAJIN family. In terms of assembly, component of the MAJIN-TERB1-TERB2 complex, composed of MAJIN, TERB1 and TERB2.

Its subcellular location is the nucleus inner membrane. The protein localises to the chromosome. It is found in the telomere. Its function is as follows. Meiosis-specific telomere-associated protein involved in meiotic telomere attachment to the nucleus inner membrane, a crucial step for homologous pairing and synapsis. Component of the MAJIN-TERB1-TERB2 complex, which promotes telomere cap exchange by mediating attachment of telomeric DNA to the inner nuclear membrane and replacement of the protective cap of telomeric chromosomes: in early meiosis, the MAJIN-TERB1-TERB2 complex associates with telomeric DNA and the shelterin/telosome complex. During prophase, the complex matures and promotes release of the shelterin/telosome complex from telomeric DNA. In the complex, MAJIN acts as the anchoring subunit to the nucleus inner membrane. MAJIN shows DNA-binding activity, possibly for the stabilization of telomere attachment on the nucleus inner membrane. The chain is Membrane-anchored junction protein from Homo sapiens (Human).